Consider the following 222-residue polypeptide: Cytidylate kinase (222 aa).

11-19 (GPTASGKGT) serves as a coordination point for ATP.

This sequence belongs to the cytidylate kinase family. Type 1 subfamily.

The protein resides in the cytoplasm. The enzyme catalyses CMP + ATP = CDP + ADP. The catalysed reaction is dCMP + ATP = dCDP + ADP. This chain is Cytidylate kinase, found in Cupriavidus necator (strain ATCC 17699 / DSM 428 / KCTC 22496 / NCIMB 10442 / H16 / Stanier 337) (Ralstonia eutropha).